The chain runs to 235 residues: Geranylgeranylglyceryl phosphate synthase (235 aa).

A sn-glycerol 1-phosphate-binding site is contributed by lysine 13. 2 residues coordinate Mg(2+): aspartate 15 and threonine 42. Residues tyrosine 162 to glycine 167, glycine 192, and glycine 212 to aspartate 213 each bind sn-glycerol 1-phosphate.

Belongs to the GGGP/HepGP synthase family. Group I subfamily. Requires Mg(2+) as cofactor.

It is found in the cytoplasm. It catalyses the reaction sn-glycerol 1-phosphate + (2E,6E,10E)-geranylgeranyl diphosphate = sn-3-O-(geranylgeranyl)glycerol 1-phosphate + diphosphate. It functions in the pathway membrane lipid metabolism; glycerophospholipid metabolism. Its function is as follows. Prenyltransferase that catalyzes the transfer of the geranylgeranyl moiety of geranylgeranyl diphosphate (GGPP) to the C3 hydroxyl of sn-glycerol-1-phosphate (G1P). This reaction is the first ether-bond-formation step in the biosynthesis of archaeal membrane lipids. The chain is Geranylgeranylglyceryl phosphate synthase from Natronomonas pharaonis (strain ATCC 35678 / DSM 2160 / CIP 103997 / JCM 8858 / NBRC 14720 / NCIMB 2260 / Gabara) (Halobacterium pharaonis).